A 322-amino-acid chain; its full sequence is Ribosomal RNA small subunit methyltransferase H (322 aa).

Residues 40 to 42 (GGH), D60, F84, D106, and Q113 each bind S-adenosyl-L-methionine.

Belongs to the methyltransferase superfamily. RsmH family.

The protein resides in the cytoplasm. The enzyme catalyses cytidine(1402) in 16S rRNA + S-adenosyl-L-methionine = N(4)-methylcytidine(1402) in 16S rRNA + S-adenosyl-L-homocysteine + H(+). Functionally, specifically methylates the N4 position of cytidine in position 1402 (C1402) of 16S rRNA. The sequence is that of Ribosomal RNA small subunit methyltransferase H from Mannheimia succiniciproducens (strain KCTC 0769BP / MBEL55E).